The chain runs to 311 residues: Aspartate carbamoyltransferase catalytic subunit (311 aa).

Carbamoyl phosphate is bound by residues Arg-55 and Thr-56. L-aspartate is bound at residue Lys-85. Carbamoyl phosphate-binding residues include Arg-106, His-134, and Gln-137. L-aspartate contacts are provided by Arg-167 and Arg-228. The carbamoyl phosphate site is built by Leu-266 and Pro-267.

Belongs to the aspartate/ornithine carbamoyltransferase superfamily. ATCase family. Heterododecamer (2C3:3R2) of six catalytic PyrB chains organized as two trimers (C3), and six regulatory PyrI chains organized as three dimers (R2).

The catalysed reaction is carbamoyl phosphate + L-aspartate = N-carbamoyl-L-aspartate + phosphate + H(+). Its pathway is pyrimidine metabolism; UMP biosynthesis via de novo pathway; (S)-dihydroorotate from bicarbonate: step 2/3. In terms of biological role, catalyzes the condensation of carbamoyl phosphate and aspartate to form carbamoyl aspartate and inorganic phosphate, the committed step in the de novo pyrimidine nucleotide biosynthesis pathway. This Psychromonas ingrahamii (strain DSM 17664 / CCUG 51855 / 37) protein is Aspartate carbamoyltransferase catalytic subunit.